A 743-amino-acid chain; its full sequence is Serine/threonine-protein kinase GD17699 (743 aa).

The disordered stretch occupies residues 54–78; the sequence is NVQEDNSYNRDCDSPVSSSSEPEKE. Doublecortin domains are found at residues 154 to 240 and 309 to 392; these read LRIK…VEYN and RIVT…AEDF. One can recognise a Protein kinase domain in the interval 473-731; it reads YTLGRIIGDG…SEDILDHPWT (259 aa). ATP is bound by residues 479-487 and lysine 502; that span reads IGDGNFAIV. Residue aspartate 594 is the Proton acceptor of the active site.

This sequence belongs to the protein kinase superfamily. CAMK Ser/Thr protein kinase family. CaMK subfamily.

It carries out the reaction L-seryl-[protein] + ATP = O-phospho-L-seryl-[protein] + ADP + H(+). It catalyses the reaction L-threonyl-[protein] + ATP = O-phospho-L-threonyl-[protein] + ADP + H(+). This Drosophila simulans (Fruit fly) protein is Serine/threonine-protein kinase GD17699.